A 483-amino-acid polypeptide reads, in one-letter code: Acetyl-coenzyme A carboxylase carboxyl transferase subunit beta, chloroplastic (483 aa).

A CoA carboxyltransferase N-terminal domain is found at 221–483 (LWVQCENCYG…FQFHGFFPRP (263 aa)). Residues Cys225, Cys228, Cys244, and Cys247 each coordinate Zn(2+). A C4-type zinc finger spans residues 225–247 (CENCYGLNYKKFFSSKMNICEQC).

This sequence belongs to the AccD/PCCB family. In terms of assembly, acetyl-CoA carboxylase is a heterohexamer composed of biotin carboxyl carrier protein, biotin carboxylase and 2 subunits each of ACCase subunit alpha and ACCase plastid-coded subunit beta (accD). It depends on Zn(2+) as a cofactor.

It is found in the plastid. The protein resides in the chloroplast stroma. The catalysed reaction is N(6)-carboxybiotinyl-L-lysyl-[protein] + acetyl-CoA = N(6)-biotinyl-L-lysyl-[protein] + malonyl-CoA. Its pathway is lipid metabolism; malonyl-CoA biosynthesis; malonyl-CoA from acetyl-CoA: step 1/1. Its function is as follows. Component of the acetyl coenzyme A carboxylase (ACC) complex. Biotin carboxylase (BC) catalyzes the carboxylation of biotin on its carrier protein (BCCP) and then the CO(2) group is transferred by the transcarboxylase to acetyl-CoA to form malonyl-CoA. The chain is Acetyl-coenzyme A carboxylase carboxyl transferase subunit beta, chloroplastic from Nuphar advena (Common spatterdock).